The sequence spans 214 residues: Ribonuclease P protein component 3 (214 aa).

Belongs to the eukaryotic/archaeal RNase P protein component 3 family. As to quaternary structure, consists of a catalytic RNA component and at least 4-5 protein subunits. Forms a subcomplex with Rnp2 which stimulates the catalytic RNA.

The protein resides in the cytoplasm. It catalyses the reaction Endonucleolytic cleavage of RNA, removing 5'-extranucleotides from tRNA precursor.. Part of ribonuclease P, a protein complex that generates mature tRNA molecules by cleaving their 5'-ends. The RNA is catalytic, but its KM for pre-tRNA is 170-fold decreased in the presence of the 4 known protein subunits (Rnp1-4). The protein subunits also decrease the amount of Mg(2+) needed for activity. This chain is Ribonuclease P protein component 3, found in Pyrococcus furiosus (strain ATCC 43587 / DSM 3638 / JCM 8422 / Vc1).